A 274-amino-acid chain; its full sequence is uncharacterized protein (274 aa).

An N-terminal signal peptide occupies residues methionine 1–alanine 19.

This is an uncharacterized protein from Rickettsia prowazekii (strain Madrid E).